Reading from the N-terminus, the 29-residue chain is Cytochrome b6-f complex subunit 8 (29 aa).

A helical transmembrane segment spans residues 3–23 (IVSLAWASLMVVFTFSLSLVV).

This sequence belongs to the PetN family. In terms of assembly, the 4 large subunits of the cytochrome b6-f complex are cytochrome b6, subunit IV (17 kDa polypeptide, PetD), cytochrome f and the Rieske protein, while the 4 small subunits are PetG, PetL, PetM and PetN. The complex functions as a dimer.

The protein localises to the plastid. It is found in the chloroplast thylakoid membrane. Its function is as follows. Component of the cytochrome b6-f complex, which mediates electron transfer between photosystem II (PSII) and photosystem I (PSI), cyclic electron flow around PSI, and state transitions. This is Cytochrome b6-f complex subunit 8 from Coffea arabica (Arabian coffee).